Consider the following 120-residue polypeptide: Alpha-amylase inhibitor Haim-2 (120 aa).

The N-terminal stretch at 1-32 (MKRYVCSTFVACVMVLCVIPASGAAAHEAVAE) is a signal peptide. 2 disulfide bridges follow: C43/C59 and C77/C104.

In terms of biological role, inhibits mammalian alpha-amylases specifically but has no action on plant and microbial alpha-amylases. The polypeptide is Alpha-amylase inhibitor Haim-2 (Streptomyces griseosporeus).